The sequence spans 47 residues: IgA-inducing protein (47 aa).

Residues 1–24 (MKKRSVSGCNITILAVVFSHLSAG) form the signal peptide.

In terms of tissue distribution, expressed in Peyer patches, spleen, thymus, liver and mesenteric lymph node. Expressed at high levels by dendritic cells, and at lower levels by T-cells, monocytes and B-cells.

It localises to the secreted. Functionally, enhances IgA secretion from B-cells stimulated via CD40. The polypeptide is IgA-inducing protein (IGIP) (Bos taurus (Bovine)).